The sequence spans 298 residues: MESTLIKGSMVAIITPFKNGKIDEVGYEKLIKREIANGINVIVPVGTTGESATLTHEEHRVCIEIAVDTCKGTDVKVLAGAGSNATHEAIGLAKFAQDHGADAVLSVAPYYNKPTQQGLYLHYKEIANSVEIPVLLYNVPGRTGCDIKADTVIRLFRECKNIIGVKEASGDIDRCVDLLSREPHMTVVSGEDSINYPILANGGKGVISVTANLLPDYVAKLCDYALKGDFVKSREINNELYELNKILFVESNPVPIKAAMYIAGLIETLEYRLPLCEPSKENYKKIEETIKKYKIKGL.

Residue Thr-48 participates in pyruvate binding. The active-site Proton donor/acceptor is Tyr-137. Lys-166 serves as the catalytic Schiff-base intermediate with substrate. Ile-207 is a pyruvate binding site.

This sequence belongs to the DapA family. Homotetramer; dimer of dimers.

Its subcellular location is the cytoplasm. It catalyses the reaction L-aspartate 4-semialdehyde + pyruvate = (2S,4S)-4-hydroxy-2,3,4,5-tetrahydrodipicolinate + H2O + H(+). The protein operates within amino-acid biosynthesis; L-lysine biosynthesis via DAP pathway; (S)-tetrahydrodipicolinate from L-aspartate: step 3/4. In terms of biological role, catalyzes the condensation of (S)-aspartate-beta-semialdehyde [(S)-ASA] and pyruvate to 4-hydroxy-tetrahydrodipicolinate (HTPA). The chain is 4-hydroxy-tetrahydrodipicolinate synthase from Campylobacter hominis (strain ATCC BAA-381 / DSM 21671 / CCUG 45161 / LMG 19568 / NCTC 13146 / CH001A).